A 585-amino-acid chain; its full sequence is Bifunctional lycopene cyclase/phytoene synthase (585 aa).

A lycopene beta-cyclase region spans residues 1 to 243; the sequence is MGFDYAIVHV…IVFGQLAFDN (243 aa). Transmembrane regions (helical) follow at residues 3–23, 35–55, 75–97, 123–141, 151–171, 173–193, and 221–241; these read FDYA…LTLL, KVLF…SYLI, IPLE…YLIL, LAGQ…LRVH, LIVV…YQFI, GLPW…LWLV, and IEEA…QLAF. The segment at 250–585 is phytoene synthase; it reads TFPALFPKPP…AWRTLNKSIA (336 aa).

It in the N-terminal section; belongs to the lycopene beta-cyclase family. This sequence in the C-terminal section; belongs to the phytoene/squalene synthase family.

The protein localises to the membrane. The catalysed reaction is all-trans-lycopene = gamma-carotene. The enzyme catalyses gamma-carotene = all-trans-beta-carotene. It catalyses the reaction 2 (2E,6E,10E)-geranylgeranyl diphosphate = 15-cis-phytoene + 2 diphosphate. The protein operates within carotenoid biosynthesis; beta-carotene biosynthesis. It functions in the pathway carotenoid biosynthesis; phytoene biosynthesis; all-trans-phytoene from geranylgeranyl diphosphate: step 1/1. Functionally, bifunctional enzyme that catalyzes the reactions from geranylgeranyl diphosphate to phytoene (phytoene synthase) and lycopene to beta-carotene via the intermediate gamma-carotene (lycopene cyclase). This is Bifunctional lycopene cyclase/phytoene synthase from Phaeosphaeria nodorum (strain SN15 / ATCC MYA-4574 / FGSC 10173) (Glume blotch fungus).